We begin with the raw amino-acid sequence, 317 residues long: Protein CbxX, chromosomal (317 aa).

Residues 1–21 (MSAPETTAPLQPPAAPAASLP) form a disordered region. 85–92 (GNPGTGKT) lines the ATP pocket.

The protein belongs to the CbxX/CfxQ family.

Functionally, seems to be necessary for the expression of RuBisCO. In Cupriavidus necator (strain ATCC 17699 / DSM 428 / KCTC 22496 / NCIMB 10442 / H16 / Stanier 337) (Ralstonia eutropha), this protein is Protein CbxX, chromosomal (cbxXC).